A 396-amino-acid chain; its full sequence is Elongation factor Tu (396 aa).

Residues lysine 10–glutamate 206 form the tr-type G domain. The segment at glycine 19–threonine 26 is G1. Glycine 19–threonine 26 is a binding site for GTP. Threonine 26 is a Mg(2+) binding site. The G2 stretch occupies residues glycine 60–alanine 64. The interval aspartate 81 to glycine 84 is G3. GTP contacts are provided by residues aspartate 81–histidine 85 and asparagine 136–aspartate 139. The interval asparagine 136–aspartate 139 is G4. The segment at serine 174–leucine 176 is G5.

Belongs to the TRAFAC class translation factor GTPase superfamily. Classic translation factor GTPase family. EF-Tu/EF-1A subfamily. In terms of assembly, monomer.

It localises to the cytoplasm. It carries out the reaction GTP + H2O = GDP + phosphate + H(+). Functionally, GTP hydrolase that promotes the GTP-dependent binding of aminoacyl-tRNA to the A-site of ribosomes during protein biosynthesis. In Geobacter metallireducens (strain ATCC 53774 / DSM 7210 / GS-15), this protein is Elongation factor Tu.